A 353-amino-acid chain; its full sequence is Photosystem II D2 protein (353 aa).

Position 2 is an N-acetylthreonine (T2). T2 is subject to Phosphothreonine. Residues 41-61 form a helical membrane-spanning segment; that stretch reads CAYFALGGWFTGTTFVTSWYT. H118 serves as a coordination point for chlorophyll a. Residues 125–141 traverse the membrane as a helical segment; sequence GFMLRQFELARSVQLRP. Positions 130 and 143 each coordinate pheophytin a. Residues 153 to 166 traverse the membrane as a helical segment; that stretch reads VFVSVFLIYPLGQS. H198 serves as a coordination point for chlorophyll a. Residues 208–228 traverse the membrane as a helical segment; sequence AALLCAIHGATVENTLFEDGD. Residues H215 and F262 each coordinate a plastoquinone. A Fe cation-binding site is contributed by H215. H269 lines the Fe cation pocket. The helical transmembrane segment at 279-295 threads the bilayer; it reads GLWMSAIGVVGLALNLR.

It belongs to the reaction center PufL/M/PsbA/D family. PSII is composed of 1 copy each of membrane proteins PsbA, PsbB, PsbC, PsbD, PsbE, PsbF, PsbH, PsbI, PsbJ, PsbK, PsbL, PsbM, PsbT, PsbX, PsbY, PsbZ, Psb30/Ycf12, at least 3 peripheral proteins of the oxygen-evolving complex and a large number of cofactors. It forms dimeric complexes. It depends on The D1/D2 heterodimer binds P680, chlorophylls that are the primary electron donor of PSII, and subsequent electron acceptors. It shares a non-heme iron and each subunit binds pheophytin, quinone, additional chlorophylls, carotenoids and lipids. There is also a Cl(-1) ion associated with D1 and D2, which is required for oxygen evolution. The PSII complex binds additional chlorophylls, carotenoids and specific lipids. as a cofactor.

Its subcellular location is the plastid. The protein resides in the chloroplast thylakoid membrane. It catalyses the reaction 2 a plastoquinone + 4 hnu + 2 H2O = 2 a plastoquinol + O2. Photosystem II (PSII) is a light-driven water:plastoquinone oxidoreductase that uses light energy to abstract electrons from H(2)O, generating O(2) and a proton gradient subsequently used for ATP formation. It consists of a core antenna complex that captures photons, and an electron transfer chain that converts photonic excitation into a charge separation. The D1/D2 (PsbA/PsbD) reaction center heterodimer binds P680, the primary electron donor of PSII as well as several subsequent electron acceptors. D2 is needed for assembly of a stable PSII complex. This chain is Photosystem II D2 protein, found in Saccharum hybrid (Sugarcane).